The primary structure comprises 854 residues: Glucans biosynthesis glucosyltransferase H (854 aa).

A run of 7 helical transmembrane segments spans residues 155–175, 209–229, 528–548, 583–603, 619–639, 671–691, and 695–715; these read ILLVLTLFQTAIATWYMKTIL, ILVLFAVLFCWVSAGFWTALM, VFLTGVMSYLSAPLWFMFLML, IALFSTTLVLLFLPKLLSVIL, FISLLLEMLFSVLLAPVRMLF, FVRHGSQLILGLVWAIGMAWL, and FLWWLAPIVFSLILSPFVSVY.

This sequence belongs to the glycosyltransferase 2 family. OpgH subfamily.

The protein localises to the cell inner membrane. It participates in glycan metabolism; osmoregulated periplasmic glucan (OPG) biosynthesis. In terms of biological role, involved in the biosynthesis of osmoregulated periplasmic glucans (OPGs). The protein is Glucans biosynthesis glucosyltransferase H of Pectobacterium carotovorum subsp. carotovorum (strain PC1).